The following is a 460-amino-acid chain: Mercuric reductase (460 aa).

The HMA domain occupies 1-65; it reads MTHLKITGMT…AVAGLGYKAM (65 aa). 2 residues coordinate a metal cation: Cys11 and Cys14. FAD contacts are provided by Ala110, Gly130, and Thr135. A disulfide bridge links Cys136 with Cys141. Residues Lys145 and Ala211 each contribute to the FAD site. Residues Cys457 and Cys458 each coordinate Hg(2+).

It belongs to the class-I pyridine nucleotide-disulfide oxidoreductase family. Homodimer. It depends on FAD as a cofactor.

The enzyme catalyses Hg + NADP(+) + H(+) = Hg(2+) + NADPH. Resistance to Hg(2+) in bacteria appears to be governed by a specialized system which includes mercuric reductase. MerA protein is responsible for volatilizing mercury as Hg(0). The sequence is that of Mercuric reductase (merA) from Serratia marcescens.